Reading from the N-terminus, the 38-residue chain is Cytochrome b6-f complex subunit 5 (38 aa).

The chain crosses the membrane as a helical span at residues L5–A25.

The protein belongs to the PetG family. The 4 large subunits of the cytochrome b6-f complex are cytochrome b6, subunit IV (17 kDa polypeptide, PetD), cytochrome f and the Rieske protein, while the 4 small subunits are PetG, PetL, PetM and PetN. The complex functions as a dimer.

It localises to the cellular thylakoid membrane. In terms of biological role, component of the cytochrome b6-f complex, which mediates electron transfer between photosystem II (PSII) and photosystem I (PSI), cyclic electron flow around PSI, and state transitions. PetG is required for either the stability or assembly of the cytochrome b6-f complex. This chain is Cytochrome b6-f complex subunit 5, found in Synechocystis sp. (strain ATCC 27184 / PCC 6803 / Kazusa).